The chain runs to 535 residues: CTP synthase (535 aa).

Residues 1–267 form an amidoligase domain region; sequence MTKYIFVTGG…DQIVCDHLKL (267 aa). S13 contributes to the CTP binding site. S13 provides a ligand contact to UTP. 14-19 contributes to the ATP binding site; that stretch reads SLGKGI. Y54 serves as a coordination point for L-glutamine. D71 provides a ligand contact to ATP. Residues D71 and E141 each contribute to the Mg(2+) site. Residues 148 to 150, 188 to 193, and K224 contribute to the CTP site; these read DIE and KTKPTQ. UTP is bound by residues 188 to 193 and K224; that span reads KTKPTQ. Residue 240–242 coordinates ATP; that stretch reads RDA. The 243-residue stretch at 292-534 folds into the Glutamine amidotransferase type-1 domain; sequence KIALVGKYVE…VSASITNKES (243 aa). G354 contacts L-glutamine. The active-site Nucleophile; for glutamine hydrolysis is the C381. L-glutamine-binding positions include 382–385, E405, and R462; that span reads LGMQ. Residues H507 and E509 contribute to the active site.

Belongs to the CTP synthase family. In terms of assembly, homotetramer.

The catalysed reaction is UTP + L-glutamine + ATP + H2O = CTP + L-glutamate + ADP + phosphate + 2 H(+). The enzyme catalyses L-glutamine + H2O = L-glutamate + NH4(+). It carries out the reaction UTP + NH4(+) + ATP = CTP + ADP + phosphate + 2 H(+). Its pathway is pyrimidine metabolism; CTP biosynthesis via de novo pathway; CTP from UDP: step 2/2. Its activity is regulated as follows. Allosterically activated by GTP, when glutamine is the substrate; GTP has no effect on the reaction when ammonia is the substrate. The allosteric effector GTP functions by stabilizing the protein conformation that binds the tetrahedral intermediate(s) formed during glutamine hydrolysis. Inhibited by the product CTP, via allosteric rather than competitive inhibition. Catalyzes the ATP-dependent amination of UTP to CTP with either L-glutamine or ammonia as the source of nitrogen. Regulates intracellular CTP levels through interactions with the four ribonucleotide triphosphates. The sequence is that of CTP synthase from Bacillus mycoides (strain KBAB4) (Bacillus weihenstephanensis).